Consider the following 288-residue polypeptide: Probable ketoamine kinase VC_1539 (288 aa).

Position 92–94 (92–94 (NYL)) interacts with ATP. The active-site Proton acceptor is the Asp195.

This sequence belongs to the fructosamine kinase family.

Ketoamine kinase that phosphorylates ketoamines on the third carbon of the sugar moiety to generate ketoamine 3-phosphate. The sequence is that of Probable ketoamine kinase VC_1539 from Vibrio cholerae serotype O1 (strain ATCC 39315 / El Tor Inaba N16961).